Reading from the N-terminus, the 443-residue chain is Deoxyguanosinetriphosphate triphosphohydrolase-like protein (443 aa).

In terms of domain architecture, HD spans 66–259 (RLTHSLEAAQ…MELADDIAYG (194 aa)).

Belongs to the dGTPase family. Type 2 subfamily.

This is Deoxyguanosinetriphosphate triphosphohydrolase-like protein from Vibrio vulnificus (strain CMCP6).